Consider the following 273-residue polypeptide: Undecaprenyl-diphosphatase (273 aa).

7 helical membrane passes run 6–26 (SLLV…LPVS), 45–65 (AKTF…VMFW), 90–110 (LTLI…LLFH), 116–136 (LFNP…LIAA), 190–210 (YAAS…ATAL), 222–242 (GDIP…LVAI), and 252–272 (ISFI…YVVF).

The protein belongs to the UppP family.

The protein resides in the cell inner membrane. The enzyme catalyses di-trans,octa-cis-undecaprenyl diphosphate + H2O = di-trans,octa-cis-undecaprenyl phosphate + phosphate + H(+). Functionally, catalyzes the dephosphorylation of undecaprenyl diphosphate (UPP). Confers resistance to bacitracin. The chain is Undecaprenyl-diphosphatase from Escherichia fergusonii (strain ATCC 35469 / DSM 13698 / CCUG 18766 / IAM 14443 / JCM 21226 / LMG 7866 / NBRC 102419 / NCTC 12128 / CDC 0568-73).